Consider the following 449-residue polypeptide: UDP-N-acetylmuramoylalanine--D-glutamate ligase (449 aa).

Residue G118–T124 participates in ATP binding.

It belongs to the MurCDEF family.

It localises to the cytoplasm. The catalysed reaction is UDP-N-acetyl-alpha-D-muramoyl-L-alanine + D-glutamate + ATP = UDP-N-acetyl-alpha-D-muramoyl-L-alanyl-D-glutamate + ADP + phosphate + H(+). It functions in the pathway cell wall biogenesis; peptidoglycan biosynthesis. Cell wall formation. Catalyzes the addition of glutamate to the nucleotide precursor UDP-N-acetylmuramoyl-L-alanine (UMA). This chain is UDP-N-acetylmuramoylalanine--D-glutamate ligase, found in Staphylococcus aureus (strain MSSA476).